A 1010-amino-acid polypeptide reads, in one-letter code: Eukaryotic translation initiation factor 4E transporter (1010 aa).

The short motif at 10–16 (YSKVDLL) is the YXXXXLphi motif element. Disordered regions lie at residues 154–182 (GSNS…RKGS), 196–277 (PDHD…RLVE), 289–320 (YDSK…SKRG), 354–391 (NEER…SNDS), and 921–960 (QSNP…ERIS). The segment covering 201-211 (CMSSSPTFSTS) has biased composition (polar residues). Basic and acidic residues predominate over residues 227 to 247 (DNWDYKNEKTVEASIENEKET). Residues 248–263 (SPNGSGSTSSLNQHNQ) show a composition bias toward polar residues. Composition is skewed to basic and acidic residues over residues 354-364 (NEERSVTEDKN) and 372-384 (KNLD…DEAS). Positions 934-953 (SDSSDSGNVIKANSLTSPSY) are enriched in polar residues.

Belongs to the 4E-T/EIF4E-T family. As to quaternary structure, interacts (via YXXXXLphi motif) with eIF4E1. Interacts with DDX6/me31B. Expressed in all larval and adult organs and tissues, with highest levels in the ovary.

The protein localises to the cytoplasm. Its subcellular location is the P-body. It is found in the nucleus. In terms of biological role, eIF4E1-binding protein that regulates translation and stability of mRNAs in processing bodies (P-bodies). Probably plays a role in P-bodies to coordinate the storage of translationally inactive mRNAs in the cytoplasm and prevent their degradation. Acts as a binding platform for multiple RNA-binding proteins. Required for the formation of P-bodies. The sequence is that of Eukaryotic translation initiation factor 4E transporter from Drosophila melanogaster (Fruit fly).